The primary structure comprises 414 residues: Probable peptidoglycan glycosyltransferase FtsW (414 aa).

Residues 1–12 (MRLSLPRLKMPR) are Cytoplasmic-facing. The helical transmembrane segment at 13 to 33 (LPGFSILVWISTALKGWVMGS) threads the bilayer. Residues 34–47 (REKDTDSLIMYDRT) lie on the Periplasmic side of the membrane. Residues 48 to 68 (LLWLTFGLAAIGFIMVTSASM) form a helical membrane-spanning segment. Residues 69–86 (PIGQRLTNDPFFFAKRDG) lie on the Cytoplasmic side of the membrane. Residues 87 to 107 (VYLILAFILAIITLRLPMEFW) form a helical membrane-spanning segment. At 108–111 (QRYS) the chain is on the periplasmic side. A helical membrane pass occupies residues 112–132 (ATMLLGSIILLMIVLVVGSSV). Topologically, residues 133 to 174 (KGASRWIDLGLLRIQPAELTKLSLFCYIANYLVRKGDEVRNN) are cytoplasmic. The helical transmembrane segment at 175-194 (LRGFLKPMGVILVLAVLLLA) threads the bilayer. Residues 195-197 (QPD) lie on the Periplasmic side of the membrane. The helical transmembrane segment at 198-217 (LGTVVVLFVTTLAMLFLAGA) threads the bilayer. Lys218 is a topological domain (cytoplasmic). A helical transmembrane segment spans residues 219–239 (LWQFIAIIGMGISAVVLLILA). Over 240-301 (EPYRIRRVTA…PEAHTDFIFA (62 aa)) the chain is Periplasmic. Residues 302–322 (IIGEELGYVGVVLALLMVFFV) traverse the membrane as a helical segment. The Cytoplasmic segment spans residues 323-342 (AFRAMSIGRKALEIDHRFSG). Residues 343–363 (FLACSIGIWFSFQALVNVGAA) traverse the membrane as a helical segment. Topologically, residues 364–373 (AGMLPTKGLT) are periplasmic. The chain crosses the membrane as a helical span at residues 374–394 (LPLISYGGSSLLIMSTAIMML). Residues 395-414 (LRIDYETRLEKAQAFVRGSR) lie on the Cytoplasmic side of the membrane.

Belongs to the SEDS family. FtsW subfamily.

Its subcellular location is the cell inner membrane. It catalyses the reaction [GlcNAc-(1-&gt;4)-Mur2Ac(oyl-L-Ala-gamma-D-Glu-L-Lys-D-Ala-D-Ala)](n)-di-trans,octa-cis-undecaprenyl diphosphate + beta-D-GlcNAc-(1-&gt;4)-Mur2Ac(oyl-L-Ala-gamma-D-Glu-L-Lys-D-Ala-D-Ala)-di-trans,octa-cis-undecaprenyl diphosphate = [GlcNAc-(1-&gt;4)-Mur2Ac(oyl-L-Ala-gamma-D-Glu-L-Lys-D-Ala-D-Ala)](n+1)-di-trans,octa-cis-undecaprenyl diphosphate + di-trans,octa-cis-undecaprenyl diphosphate + H(+). Its pathway is cell wall biogenesis; peptidoglycan biosynthesis. In terms of biological role, peptidoglycan polymerase that is essential for cell division. In Escherichia coli O157:H7, this protein is Probable peptidoglycan glycosyltransferase FtsW.